The following is a 314-amino-acid chain: tRNA pseudouridine synthase B (314 aa).

The Nucleophile role is filled by Asp-47.

Belongs to the pseudouridine synthase TruB family. Type 1 subfamily.

It carries out the reaction uridine(55) in tRNA = pseudouridine(55) in tRNA. In terms of biological role, responsible for synthesis of pseudouridine from uracil-55 in the psi GC loop of transfer RNAs. This is tRNA pseudouridine synthase B from Vibrio parahaemolyticus serotype O3:K6 (strain RIMD 2210633).